Consider the following 549-residue polypeptide: Pleckstrin homology domain-containing family A member 8 (549 aa).

Positions 1 to 93 (MEGVLYKWTN…WLVALGTAKA (93 aa)) constitute a PH domain. Disordered regions lie at residues 180–245 (NPDL…ENIS) and 257–312 (QNDL…QEVQ). Positions 203 to 219 (KSNDPKNLHPGETRKDL) are enriched in basic and acidic residues. A compositionally biased stretch (acidic residues) spans 276 to 288 (EPVEEQQTDGSTE). Residues 299–309 (EVSMSPTQNKQ) are compositionally biased toward polar residues.

The protein localises to the cytoplasm. Its subcellular location is the golgi apparatus. The protein resides in the trans-Golgi network membrane. It is found in the membrane. In terms of biological role, cargo transport protein that is required for apical transport from the trans-Golgi network (TGN) to the plasma membrane. The polypeptide is Pleckstrin homology domain-containing family A member 8 (plekha8) (Danio rerio (Zebrafish)).